The sequence spans 316 residues: Ribose-phosphate pyrophosphokinase (316 aa).

Residues 41-43 (DGE) and 100-101 (RQ) each bind ATP. The Mg(2+) site is built by histidine 134 and aspartate 175. Lysine 198 is an active-site residue. D-ribose 5-phosphate-binding positions include arginine 200, aspartate 224, and 228-232 (DTARS).

The protein belongs to the ribose-phosphate pyrophosphokinase family. Class I subfamily. Homohexamer. It depends on Mg(2+) as a cofactor.

It is found in the cytoplasm. The catalysed reaction is D-ribose 5-phosphate + ATP = 5-phospho-alpha-D-ribose 1-diphosphate + AMP + H(+). Its pathway is metabolic intermediate biosynthesis; 5-phospho-alpha-D-ribose 1-diphosphate biosynthesis; 5-phospho-alpha-D-ribose 1-diphosphate from D-ribose 5-phosphate (route I): step 1/1. Functionally, involved in the biosynthesis of the central metabolite phospho-alpha-D-ribosyl-1-pyrophosphate (PRPP) via the transfer of pyrophosphoryl group from ATP to 1-hydroxyl of ribose-5-phosphate (Rib-5-P). This is Ribose-phosphate pyrophosphokinase from Thermosipho africanus (strain TCF52B).